A 438-amino-acid polypeptide reads, in one-letter code: RING finger protein 150 (438 aa).

The N-terminal stretch at 1 to 34 (MAMSLIQACCSLALSTWLLSFCFVHLLCLDFTVA) is a signal peptide. The Extracellular portion of the chain corresponds to 35–208 (EKEEWYTAFV…NLQKYVSRTS (174 aa)). N-linked (GlcNAc...) asparagine glycosylation is found at N45, N125, N153, and N186. A PA domain is found at 81-183 (SPKQDARGEV…PKGKEIVSLL (103 aa)). The chain crosses the membrane as a helical span at residues 209–229 (VVFVSISFIVLMIISLAWLVF). Topologically, residues 230–438 (YYIQRFRYAN…TDQDCEEVKS (209 aa)) are cytoplasmic. The RING-type; atypical zinc-finger motif lies at 278–319 (CAVCIEGYKPNDVVRILPCRHLFHKSCVDPWLLDHRTCPMCK).

The protein resides in the membrane. The chain is RING finger protein 150 (RNF150) from Homo sapiens (Human).